The primary structure comprises 58 residues: Keratin-associated protein 21-3 (58 aa).

Interacts with hair keratins.

Its function is as follows. In the hair cortex, hair keratin intermediate filaments are embedded in an interfilamentous matrix, consisting of hair keratin-associated proteins (KRTAP), which are essential for the formation of a rigid and resistant hair shaft through their extensive disulfide bond cross-linking with abundant cysteine residues of hair keratins. The matrix proteins include the high-sulfur and high-glycine-tyrosine keratins. This chain is Keratin-associated protein 21-3 (KRTAP21-3), found in Homo sapiens (Human).